The sequence spans 181 residues: Oligoribonuclease (181 aa).

Residues L8–L171 form the Exonuclease domain. Y129 is an active-site residue.

This sequence belongs to the oligoribonuclease family.

It is found in the cytoplasm. Its function is as follows. 3'-to-5' exoribonuclease specific for small oligoribonucleotides. This Yersinia pseudotuberculosis serotype O:1b (strain IP 31758) protein is Oligoribonuclease.